We begin with the raw amino-acid sequence, 358 residues long: Aromatic amino acid aminotransferase (358 aa).

Lysine 222 bears the N6-(pyridoxal phosphate)lysine mark.

The protein belongs to the class-II pyridoxal-phosphate-dependent aminotransferase family. Homodimer. Pyridoxal 5'-phosphate is required as a cofactor.

It carries out the reaction an aromatic L-alpha-amino acid + 2-oxoglutarate = an aromatic oxo-acid + L-glutamate. Aminotransferase that catalyzes the conversion of aromatic amino acids and 2-oxoglutarate into corresponding aromatic oxo acids and L-glutamate. The protein is Aromatic amino acid aminotransferase of Mycobacterium sp. (strain KMS).